The sequence spans 90 residues: UPF0213 protein lin0209 (90 aa).

Residues 5–80 (NEHFFYVLKC…KKLSRKNKDS (76 aa)) enclose the GIY-YIG domain.

It belongs to the UPF0213 family.

The chain is UPF0213 protein lin0209 from Listeria innocua serovar 6a (strain ATCC BAA-680 / CLIP 11262).